A 498-amino-acid chain; its full sequence is Cytochrome P450 71B5 (498 aa).

A helical membrane pass occupies residues 3–23 (IFLCFLLLLPLSLIFLKKLLP). Heme is bound at residue cysteine 439.

Belongs to the cytochrome P450 family. Heme serves as cofactor.

It localises to the membrane. The protein is Cytochrome P450 71B5 (CYP71B5) of Arabidopsis thaliana (Mouse-ear cress).